Reading from the N-terminus, the 523-residue chain is Aldehyde oxidase GLOX (523 aa).

A signal peptide spans 1–19 (MILDAAIVALADLPGTWEL).

Its subcellular location is the secreted. The protein resides in the cell wall. It catalyses the reaction an aldehyde + O2 + H2O = a carboxylate + H2O2 + H(+). Its function is as follows. Catalyzes the oxidation of aldehydes to the corresponding carboxylate by coupling the reaction to the reduction of dioxygen to hydrogen peroxide. Substrates include glyoxal and other aldehydes. Involved in disease resistance against the grapevine powdery mildew E.necator. Is sufficient to confer disease resistance to E.necator. Can produce hydrogen peroxide in response to E.necator infection, and this may directly play a role in the defense mechanism during plant-pathogen interactions. The polypeptide is Aldehyde oxidase GLOX (Vitis pseudoreticulata (Chinese wild grapevine)).